We begin with the raw amino-acid sequence, 205 residues long: Large ribosomal subunit protein uL18 (205 aa).

The protein belongs to the universal ribosomal protein uL18 family. As to quaternary structure, part of the 50S ribosomal subunit. Contacts the 5S and 23S rRNAs.

In terms of biological role, this is one of the proteins that bind and probably mediate the attachment of the 5S RNA into the large ribosomal subunit, where it forms part of the central protuberance. The chain is Large ribosomal subunit protein uL18 from Pyrobaculum islandicum (strain DSM 4184 / JCM 9189 / GEO3).